We begin with the raw amino-acid sequence, 210 residues long: Mitochondrial coenzyme A diphosphatase NUDT8 (210 aa).

The 148-residue stretch at 25-172 (LRSRPAAAAV…HFSYTLPVFL (148 aa)) folds into the Nudix hydrolase domain. K70 is modified (N6-succinyllysine). The Nudix box signature appears at 70 to 91 (KCDPDDQDVIHTALRETQEELG). Mg(2+) contacts are provided by E85 and E89. The residue at position 96 (K96) is an N6-succinyllysine.

Belongs to the Nudix hydrolase family. In terms of assembly, monomer. Requires Mg(2+) as cofactor. Mn(2+) is required as a cofactor. As to expression, expressed at the highest levels in the kidneys, heart, brown adipose tissue and liver (at protein level). Expressed at lower levels in the brain, skeletal muscle, and white adipose tissue (at protein level).

It localises to the mitochondrion. It carries out the reaction an acyl-CoA + H2O = an acyl-4'-phosphopantetheine + adenosine 3',5'-bisphosphate + 2 H(+). The catalysed reaction is CoA + H2O = (R)-4'-phosphopantetheine + adenosine 3',5'-bisphosphate + 2 H(+). It catalyses the reaction acetyl-CoA + H2O = S-acetyl-4'-phosphopantetheine + adenosine 3',5'-bisphosphate + 2 H(+). The enzyme catalyses butanoyl-CoA + H2O = S-butanoyl-4'-phosphopantetheine + adenosine 3',5'-bisphosphate + 2 H(+). It carries out the reaction hexanoyl-CoA + H2O = hexanoyl-4'-phosphopantetheine + adenosine 3',5'-bisphosphate + 2 H(+). The catalysed reaction is octanoyl-CoA + H2O = S-octanoyl-4'-phosphopantetheine + adenosine 3',5'-bisphosphate + 2 H(+). It catalyses the reaction propanoyl-CoA + H2O = propanoyl-4'-phosphopantetheine + adenosine 3',5'-bisphosphate + 2 H(+). The enzyme catalyses malonyl-CoA + H2O = malonyl-4'-phosphopantetheine + adenosine 3',5'-bisphosphate + 2 H(+). It carries out the reaction succinyl-CoA + H2O = succinyl-4'-phosphopantetheine + adenosine 3',5'-bisphosphate + 2 H(+). The catalysed reaction is a 5'-end CoA-ribonucleoside in mRNA + H2O = a 5'-end phospho-adenosine-phospho-ribonucleoside in mRNA + (R)-4'-phosphopantetheine + 2 H(+). Its function is as follows. Acyl-CoA diphosphatase that mediates the hydrolysis of a wide range of CoA and CoA esters yielding 3',5'-ADP and the corresponding 4'-phosphopantetheine derivative as products. Hydrolyzes short- and medium-chain acyl-CoAs, exhibiting the highest activity toward free CoA, hexanoyl-CoA, and octanoyl-CoA and the lowest activity against acetyl-CoA. Exhibits decapping activity towards dpCoA-capped RNAs in vitro. In Mus musculus (Mouse), this protein is Mitochondrial coenzyme A diphosphatase NUDT8 (Nudt8).